The sequence spans 291 residues: Sulfotransferase 1A1 (291 aa).

Residue 44-49 participates in 3'-phosphoadenylyl sulfate binding; sequence KSGTTW. Residue 102-104 participates in substrate binding; it reads KTH. The active-site Proton acceptor is the histidine 104. 3'-phosphoadenylyl sulfate-binding positions include arginine 126, serine 134, tyrosine 189, 223 to 228, and 251 to 255; these read TSFKKM and FMRKG. Serine 134 is modified (phosphoserine).

It belongs to the sulfotransferase 1 family. As to quaternary structure, homodimer. The N-terminus is blocked. As to expression, liver, kidney, heart and colon.

The protein localises to the cytoplasm. It catalyses the reaction a phenol + 3'-phosphoadenylyl sulfate = an aryl sulfate + adenosine 3',5'-bisphosphate + H(+). The catalysed reaction is 17beta-estradiol + 3'-phosphoadenylyl sulfate = 17beta-estradiol 3-sulfate + adenosine 3',5'-bisphosphate + H(+). It carries out the reaction 4-ethylphenol + 3'-phosphoadenylyl sulfate = 4-ethylphenyl sulfate + adenosine 3',5'-bisphosphate + H(+). The enzyme catalyses 4-nitrophenol + 3'-phosphoadenylyl sulfate = 4-nitrophenyl sulfate + adenosine 3',5'-bisphosphate. It catalyses the reaction dopamine + 3'-phosphoadenylyl sulfate = dopamine 3-O-sulfate + adenosine 3',5'-bisphosphate + H(+). The catalysed reaction is dopamine + 3'-phosphoadenylyl sulfate = dopamine 4-O-sulfate + adenosine 3',5'-bisphosphate + H(+). It carries out the reaction 3,3',5-triiodo-L-thyronine + 3'-phosphoadenylyl sulfate = 3,3',5-triiodo-L-thyronine sulfate + adenosine 3',5'-bisphosphate + H(+). The enzyme catalyses 3,3',5'-triiodo-L-thyronine + 3'-phosphoadenylyl sulfate = 3,3',5'-triiodo-L-thyronine sulfate + adenosine 3',5'-bisphosphate + H(+). It catalyses the reaction 3,3'-diiodo-L-thyronine + 3'-phosphoadenylyl sulfate = 3,3'-diiodo-L-thyronine sulfate + adenosine 3',5'-bisphosphate + H(+). The catalysed reaction is L-thyroxine + 3'-phosphoadenylyl sulfate = L-thyroxine sulfate + adenosine 3',5'-bisphosphate + H(+). Functionally, sulfotransferase that utilizes 3'-phospho-5'-adenylyl sulfate (PAPS) as sulfonate donor to catalyze the sulfate conjugation of a wide variety of acceptor molecules bearing a hydroxyl or an amine group. Sulfonation increases the water solubility of most compounds, and therefore their renal excretion, but it can also result in bioactivation to form active metabolites. Displays broad substrate specificity for small phenolic compounds. Plays an important roles in the sulfonation of endogenous molecules such as steroid hormones. Mediates the sulfate conjugation of a variety of xenobiotics, including the drugs acetaminophen and minoxidil. Mediates also the metabolic activation of carcinogenic N-hydroxyarylamines leading to highly reactive intermediates capable of forming DNA adducts, potentially resulting in mutagenesis. May play a role in gut microbiota-host metabolic interaction. O-sulfonates 4-ethylphenol (4-EP), a dietary tyrosine-derived metabolite produced by gut bacteria. The product 4-EPS crosses the blood-brain barrier and may negatively regulate oligodendrocyte maturation and myelination, affecting the functional connectivity of different brain regions associated with the limbic system. Catalyzes the sulfate conjugation of dopamine. Catalyzes the sulfation of T4 (L-thyroxine/3,5,3',5'-tetraiodothyronine), T3 (3,5,3'-triiodothyronine), rT3 (3,3',5'-triiodothyronine) and 3,3'-T2 (3,3'-diiodothyronine), with a substrate preference of 3,3'-T2 &gt; rT3 &gt; T3 &gt; T4. In Rattus norvegicus (Rat), this protein is Sulfotransferase 1A1 (Sult1a1).